The following is a 267-amino-acid chain: Phosphate import ATP-binding protein PstB (267 aa).

Positions 21 to 262 (VAARNLDFYY…PSKQQTEDYI (242 aa)) constitute an ABC transporter domain. 53–60 (GPSGCGKS) contributes to the ATP binding site.

The protein belongs to the ABC transporter superfamily. Phosphate importer (TC 3.A.1.7) family. As to quaternary structure, the complex is composed of two ATP-binding proteins (PstB), two transmembrane proteins (PstC and PstA) and a solute-binding protein (PstS).

It localises to the cell inner membrane. It carries out the reaction phosphate(out) + ATP + H2O = ADP + 2 phosphate(in) + H(+). Its function is as follows. Part of the ABC transporter complex PstSACB involved in phosphate import. Responsible for energy coupling to the transport system. The protein is Phosphate import ATP-binding protein PstB of Xanthomonas oryzae pv. oryzae (strain MAFF 311018).